Here is a 135-residue protein sequence, read N- to C-terminus: Large ribosomal subunit protein eL27y (135 aa).

This sequence belongs to the eukaryotic ribosomal protein eL27 family.

The polypeptide is Large ribosomal subunit protein eL27y (RPL27B) (Arabidopsis thaliana (Mouse-ear cress)).